We begin with the raw amino-acid sequence, 447 residues long: Na(+)-translocating NADH-quinone reductase subunit A (447 aa).

This sequence belongs to the NqrA family. In terms of assembly, composed of six subunits; NqrA, NqrB, NqrC, NqrD, NqrE and NqrF.

It carries out the reaction a ubiquinone + n Na(+)(in) + NADH + H(+) = a ubiquinol + n Na(+)(out) + NAD(+). Functionally, NQR complex catalyzes the reduction of ubiquinone-1 to ubiquinol by two successive reactions, coupled with the transport of Na(+) ions from the cytoplasm to the periplasm. NqrA to NqrE are probably involved in the second step, the conversion of ubisemiquinone to ubiquinol. This is Na(+)-translocating NADH-quinone reductase subunit A from Haemophilus influenzae (strain 86-028NP).